Consider the following 387-residue polypeptide: Protein RecA (387 aa).

Residue 80 to 87 participates in ATP binding; it reads GPESSGKT. Positions 348–387 are disordered; that stretch reads LDDSEVAETEEETTASKTKAKAKKEEKXVETEEIELELQD. 2 stretches are compositionally biased toward acidic residues: residues 349–360 and 378–387; these read DDSEVAETEEET and TEEIELELQD.

This sequence belongs to the RecA family.

It is found in the cytoplasm. Can catalyze the hydrolysis of ATP in the presence of single-stranded DNA, the ATP-dependent uptake of single-stranded DNA by duplex DNA, and the ATP-dependent hybridization of homologous single-stranded DNAs. It interacts with LexA causing its activation and leading to its autocatalytic cleavage. This Lactococcus lactis subsp. cremoris (Streptococcus cremoris) protein is Protein RecA.